We begin with the raw amino-acid sequence, 103 residues long: O2 contryphan Vc1 (103 aa).

Residues 1–23 (MGKLTILFLVAAALLSTQVMVQG) form the signal peptide. Positions 24–67 (DGAHERTEAEEPQHHGAKRQDGTGGYPVDDVDMMQRIFRTPLKR) are excised as a propeptide. A compositionally biased stretch (basic and acidic residues) spans 25–44 (GAHERTEAEEPQHHGAKRQD). The tract at residues 25-50 (GAHERTEAEEPQHHGAKRQDGTGGYP) is disordered. Residue Gln68 is modified to Pyrrolidone carboxylic acid. Residues Cys70 and Cys83 are joined by a disulfide bond. Positions 99 to 103 (RRGRQ) are excised as a propeptide.

Belongs to the O2 superfamily. Post-translationally, pyrrolidone carboxylic acid at position 1 has no significant effect on the structure of contryphan-Vc1. As to expression, expressed by the venom gland.

It localises to the secreted. Its function is as follows. Unknown. Intracranial injection of the peptide into mice does not produce toxic effects. In addition, the peptide does not produce any observable changes to normal or depolarization-induced intracellular calcium levels in mouse dorsal root ganglion cells. The chain is O2 contryphan Vc1 from Conus victoriae (Queen Victoria cone).